We begin with the raw amino-acid sequence, 289 residues long: Acetylglutamate kinase (289 aa).

Substrate-binding positions include 60–61 (GG), Arg-82, and Asn-182.

This sequence belongs to the acetylglutamate kinase family. ArgB subfamily.

It localises to the cytoplasm. It catalyses the reaction N-acetyl-L-glutamate + ATP = N-acetyl-L-glutamyl 5-phosphate + ADP. It participates in amino-acid biosynthesis; L-arginine biosynthesis; N(2)-acetyl-L-ornithine from L-glutamate: step 2/4. In terms of biological role, catalyzes the ATP-dependent phosphorylation of N-acetyl-L-glutamate. The chain is Acetylglutamate kinase from Methanothrix thermoacetophila (strain DSM 6194 / JCM 14653 / NBRC 101360 / PT) (Methanosaeta thermophila).